Here is a 185-residue protein sequence, read N- to C-terminus: uncharacterized protein (185 aa).

This is an uncharacterized protein from Trypanosoma brucei brucei.